We begin with the raw amino-acid sequence, 452 residues long: UPF0210 protein Ccel_1722 (452 aa).

The protein belongs to the UPF0210 family. Homodimer.

In Ruminiclostridium cellulolyticum (strain ATCC 35319 / DSM 5812 / JCM 6584 / H10) (Clostridium cellulolyticum), this protein is UPF0210 protein Ccel_1722.